The primary structure comprises 470 residues: 5-hydroxytryptamine receptor 2A (470 aa).

The Extracellular portion of the chain corresponds to 1 to 80 (MDVLCEENTS…LQEKNWSALL (80 aa)). N-linked (GlcNAc...) asparagine glycans are attached at residues N8, N38, N44, N51, N54, and N75. Residues 81–97 (TAVVIILTIAGNILVIM) traverse the membrane as a helical segment. At 98 to 111 (AVSLEKKLQNATNY) the chain is on the cytoplasmic side. A helical transmembrane segment spans residues 112 to 137 (FLMSLAIADMLLGFLVMPVSMLTILY). Topologically, residues 138–146 (GYRWPLPSK) are extracellular. Residues 147–171 (LCAVWIYLDVLFSTASIMHLCAISL) traverse the membrane as a helical segment. A disulfide bridge connects residues C148 and C227. D155 lines the serotonin pocket. The DRY motif; important for ligand-induced conformation changes motif lies at 172 to 174 (DRY). The Cytoplasmic portion of the chain corresponds to 172 to 191 (DRYVAIQNPIHHRRFNSRTK). Residues 192–215 (AFLKIIAVWTISVGISMPIPVFGL) traverse the membrane as a helical segment. Over 216-232 (QDDSKVFKEGSCLLADD) the chain is Extracellular. The helical transmembrane segment at 233–258 (NFVLIGSFVSFFIPLTIMVITYFLTI) threads the bilayer. Residues 259 to 321 (KSLQKEATLC…QSISNEQKAC (63 aa)) lie on the Cytoplasmic side of the membrane. Phosphoserine is present on S280. The helical transmembrane segment at 322–347 (KVLGIVFFLFVVMWCPFFITNIMAVI) threads the bilayer. N342 contributes to the serotonin binding site. An intrachain disulfide couples C348 to C352. The Extracellular portion of the chain corresponds to 348–355 (CKESCNED). A helical membrane pass occupies residues 356-381 (VIGALLNVFVWIGYLSSAVNPLVYTL). The NPxxY motif; important for ligand-induced conformation changes and signaling signature appears at 375-379 (NPLVY). Residues 382–470 (FNKTYRSAFS…NTVNEKVSCV (89 aa)) lie on the Cytoplasmic side of the membrane. The interval 448–470 (GKQHSEDAPADNSNTVNEKVSCV) is disordered. Polar residues predominate over residues 458–470 (DNSNTVNEKVSCV). Positions 468–470 (SCV) match the PDZ-binding motif.

It belongs to the G-protein coupled receptor 1 family. As to quaternary structure, interacts (via C-terminus) with MPDZ and PATJ. May interact (via C-terminus) with MPP3, PRDX6, DLG4, DLG1, CASK, APBA1 and MAGI2. Interacts with GRM2 and DRD2; this may affect signaling.

The protein localises to the cell membrane. It is found in the cell projection. It localises to the dendrite. The protein resides in the axon. Its subcellular location is the cytoplasmic vesicle. The protein localises to the membrane. It is found in the caveola. It localises to the presynapse. Its activity is regulated as follows. G-protein coupled receptor activity is regulated by lipids: oleamide increases HTR2A-mediated activity. Its function is as follows. G-protein coupled receptor for 5-hydroxytryptamine (serotonin). Also functions as a receptor for various drugs and psychoactive substances, including mescaline, psilocybin, 1-(2,5-dimethoxy-4-iodophenyl)-2-aminopropane (DOI) and lysergic acid diethylamide (LSD). Ligand binding causes a conformation change that triggers signaling via guanine nucleotide-binding proteins (G proteins) and modulates the activity of downstream effectors. HTR2A is coupled to G(q)/G(11) G alpha proteins and activates phospholipase C-beta, releasing diacylglycerol (DAG) and inositol 1,4,5-trisphosphate (IP3) second messengers that modulate the activity of phosphatidylinositol 3-kinase and promote the release of Ca(2+) ions from intracellular stores, respectively. Beta-arrestin family members inhibit signaling via G proteins and mediate activation of alternative signaling pathways. Affects neural activity, perception, cognition and mood. Plays a role in the regulation of behavior, including responses to anxiogenic situations and psychoactive substances. Plays a role in intestinal smooth muscle contraction, and may play a role in arterial vasoconstriction. This chain is 5-hydroxytryptamine receptor 2A (HTR2A), found in Sus scrofa (Pig).